The sequence spans 694 residues: Polyphosphate kinase (694 aa).

Asparagine 45 provides a ligand contact to ATP. The Mg(2+) site is built by arginine 367 and arginine 397. The active-site Phosphohistidine intermediate is the histidine 427. ATP contacts are provided by tyrosine 460, arginine 553, and histidine 580.

Belongs to the polyphosphate kinase 1 (PPK1) family. Mg(2+) is required as a cofactor. Post-translationally, an intermediate of this reaction is the autophosphorylated ppk in which a phosphate is covalently linked to a histidine residue through a N-P bond.

It carries out the reaction [phosphate](n) + ATP = [phosphate](n+1) + ADP. Functionally, catalyzes the reversible transfer of the terminal phosphate of ATP to form a long-chain polyphosphate (polyP). The polypeptide is Polyphosphate kinase (Campylobacter jejuni subsp. jejuni serotype O:6 (strain 81116 / NCTC 11828)).